The primary structure comprises 448 residues: Tubby-like F-box protein 3 (448 aa).

The region spanning 56 to 102 is the F-box domain; the sequence is ESRWASLPPELLREVIRRLEADESTWPSRRNVVCFAAVCRTWREMCK. A compositionally biased stretch (pro residues) spans 387 to 403; it reads PSPPPAGAPTPSQPGPA. The interval 387–406 is disordered; sequence PSPPPAGAPTPSQPGPADPE.

The protein belongs to the TUB family. As to expression, expressed in roots, leaves, flowers and seeds.

The polypeptide is Tubby-like F-box protein 3 (TULP3) (Oryza sativa subsp. japonica (Rice)).